Reading from the N-terminus, the 185-residue chain is Large ribosomal subunit protein uL13 (185 aa).

Belongs to the universal ribosomal protein uL13 family. As to quaternary structure, part of the 50S ribosomal subunit.

Its function is as follows. This protein is one of the early assembly proteins of the 50S ribosomal subunit, although it is not seen to bind rRNA by itself. It is important during the early stages of 50S assembly. This chain is Large ribosomal subunit protein uL13, found in Pyrobaculum islandicum (strain DSM 4184 / JCM 9189 / GEO3).